The following is a 423-amino-acid chain: Heat shock transcription factor, X-linked (423 aa).

Residues 1–25 (MEDKRSLSMARCEERNSRGQDHGLE) show a composition bias toward basic and acidic residues. Disordered stretches follow at residues 1–56 (MEDK…STGS), 215–303 (KSAP…EGSQ), and 397–423 (PHSHRTSQYMPASDGPQAYPDYADQST). The DNA-binding element occupies 98-282 (PFPQKLWRLV…PATPVMVPDS (185 aa)). Lysine 215 participates in a covalent cross-link: Glycyl lysine isopeptide (Lys-Gly) (interchain with G-Cter in SUMO1). Positions 243-254 (HTSPNENDQVTP) are enriched in polar residues.

It belongs to the HSF family. As to expression, testis-specific.

It localises to the nucleus. Its subcellular location is the cytoplasm. In Homo sapiens (Human), this protein is Heat shock transcription factor, X-linked (HSFX1).